We begin with the raw amino-acid sequence, 292 residues long: Elongation factor Ts (292 aa).

The tract at residues threonine 80–valine 83 is involved in Mg(2+) ion dislocation from EF-Tu.

Belongs to the EF-Ts family.

The protein localises to the cytoplasm. Functionally, associates with the EF-Tu.GDP complex and induces the exchange of GDP to GTP. It remains bound to the aminoacyl-tRNA.EF-Tu.GTP complex up to the GTP hydrolysis stage on the ribosome. The chain is Elongation factor Ts from Tolumonas auensis (strain DSM 9187 / NBRC 110442 / TA 4).